A 555-amino-acid chain; its full sequence is Bifunctional epoxide hydrolase 2 (555 aa).

The interval 1–224 (MALRAAVFDL…KVTGVQLLQT (224 aa)) is phosphatase. 2 residues coordinate Mg(2+): aspartate 9 and aspartate 11. Lysine 43 is subject to N6-acetyllysine. 123–124 (TN) contacts phosphate. Aspartate 185 serves as a coordination point for Mg(2+). 2 positions are modified to N6-acetyllysine: lysine 191 and lysine 215. The epoxide hydrolase stretch occupies residues 235–555 (SALSHGYVLI…ARNPLVDSKL (321 aa)). Residues 259–531 (PAVCLCHGFP…CGHWTQIDKP (273 aa)) form the AB hydrolase-1 domain. Aspartate 335 functions as the Nucleophile in the catalytic mechanism. At serine 370 the chain carries Phosphoserine. Substrate is bound at residue tyrosine 383. Lysine 455 bears the N6-succinyllysine mark. The Proton donor role is filled by tyrosine 466. An N6-succinyllysine modification is found at lysine 505. Cysteine 522 carries S-(15-deoxy-Delta12,14-prostaglandin J2-9-yl)cysteine lipidation. Catalysis depends on histidine 524, which acts as the Proton acceptor. Positions 553 to 555 (SKL) match the Microbody targeting signal motif. Lysine 554 is modified (N6-succinyllysine).

Belongs to the AB hydrolase superfamily. Epoxide hydrolase family. As to quaternary structure, homodimer. Requires Mg(2+) as cofactor. The covalent modification of cysteine by 15-deoxy-Delta12,14-prostaglandin-J2 is autocatalytic and reversible. It may occur as an alternative to other cysteine modifications, such as S-nitrosylation and S-palmitoylation.

The protein localises to the cytoplasm. It localises to the peroxisome. It catalyses the reaction an epoxide + H2O = an ethanediol. The catalysed reaction is (9S,10S)-10-hydroxy-9-(phosphooxy)octadecanoate + H2O = (9S,10S)-9,10-dihydroxyoctadecanoate + phosphate. It carries out the reaction (14R,15S)-epoxy-(5Z,8Z,11Z)-eicosatrienoate + H2O = (14R,15R)-dihydroxy-(5Z,8Z,11Z)-eicosatrienoate. Inhibited by 1-(1-acetylpiperidin-4-yl)-3-(4-(trifl uoromethoxy)phenyl)urea (TPAU), 1-cyclohexyl-3-dodecylurea (CDU), 12-(3-adamantan-1-yl-ureido)-dodecanoic acid (AUDA), 1-((3S, 5S, 7S)-adamantan-1-yl)-3-(5-(2-(2-ethoxyethoxy) ethoxy)pentyl)urea (AEPU), N-adamantyl-N[']-cyclohexyl urea (ACU), 4-(((1S, 4S)-4-(3-((3S, 5S, 7S)-adamantan-1-yl) ureido)cyclohexyl)oxy)benzoic acid (c-AUCB), 4-(((1R, 4R)-4-(3-((3S, 5S, 7S)-adamantan-1-yl)ureido)cyclohexyl)oxy)benzoic acid (t-AUCB), 4-(((1R, 4R)-4-(3-(4(trifluoromethoxy)phenyl)ureido)cyclohexyl)oxy)benzoic acid (t-TAUCB) and to a lesser extent by 8-(3-((3S, 5S, 7S)-adamantan-1-yl)ureido) octanoic acid (AUOA). Bifunctional enzyme. The C-terminal domain has epoxide hydrolase activity and acts on epoxides (alkene oxides, oxiranes) and arene oxides. Plays a role in xenobiotic metabolism by degrading potentially toxic epoxides. Also determines steady-state levels of physiological mediators. The N-terminal domain has lipid phosphatase activity, with the highest activity towards threo-9,10-phosphonooxy-hydroxy-octadecanoic acid, followed by erythro-9,10-phosphonooxy-hydroxy-octadecanoic acid, 12-phosphonooxy-octadec-9Z-enoic acid and 12-phosphonooxy-octadec-9E-enoic acid. In Sus scrofa (Pig), this protein is Bifunctional epoxide hydrolase 2 (EPHX2).